Reading from the N-terminus, the 305-residue chain is L-lactate dehydrogenase (305 aa).

NAD(+)-binding positions include V11, D32, K37, and G76–V77. Residues Q79, R85, and N117–D120 each bind substrate. NAD(+)-binding positions include A115–N117 and S140. D145–R148 provides a ligand contact to substrate. Beta-D-fructose 1,6-bisphosphate-binding residues include R150 and H165. H172 acts as the Proton acceptor in catalysis. At Y218 the chain carries Phosphotyrosine. Residue T227 participates in substrate binding.

The protein belongs to the LDH/MDH superfamily. LDH family. As to quaternary structure, homotetramer.

Its subcellular location is the cytoplasm. The catalysed reaction is (S)-lactate + NAD(+) = pyruvate + NADH + H(+). Its pathway is fermentation; pyruvate fermentation to lactate; (S)-lactate from pyruvate: step 1/1. Allosterically activated by fructose 1,6-bisphosphate (FBP). Functionally, catalyzes the conversion of lactate to pyruvate. This is L-lactate dehydrogenase from Chloroherpeton thalassium (strain ATCC 35110 / GB-78).